A 488-amino-acid chain; its full sequence is Protein nucleotidyltransferase YdiU (488 aa).

Positions 91, 93, 94, 114, 126, 127, 177, and 184 each coordinate ATP. The Proton acceptor role is filled by Asp-253. Mg(2+) is bound by residues Asn-254 and Asp-263. Asp-263 serves as a coordination point for ATP.

It belongs to the SELO family. Mg(2+) serves as cofactor. Mn(2+) is required as a cofactor.

The catalysed reaction is L-seryl-[protein] + ATP = 3-O-(5'-adenylyl)-L-seryl-[protein] + diphosphate. The enzyme catalyses L-threonyl-[protein] + ATP = 3-O-(5'-adenylyl)-L-threonyl-[protein] + diphosphate. It carries out the reaction L-tyrosyl-[protein] + ATP = O-(5'-adenylyl)-L-tyrosyl-[protein] + diphosphate. It catalyses the reaction L-histidyl-[protein] + UTP = N(tele)-(5'-uridylyl)-L-histidyl-[protein] + diphosphate. The catalysed reaction is L-seryl-[protein] + UTP = O-(5'-uridylyl)-L-seryl-[protein] + diphosphate. The enzyme catalyses L-tyrosyl-[protein] + UTP = O-(5'-uridylyl)-L-tyrosyl-[protein] + diphosphate. Nucleotidyltransferase involved in the post-translational modification of proteins. It can catalyze the addition of adenosine monophosphate (AMP) or uridine monophosphate (UMP) to a protein, resulting in modifications known as AMPylation and UMPylation. This Bacillus cereus (strain G9842) protein is Protein nucleotidyltransferase YdiU.